Here is a 300-residue protein sequence, read N- to C-terminus: GTPase Era (300 aa).

The Era-type G domain maps to 5–176 (HSGFVCLVGR…IDVLAAALPA (172 aa)). Positions 13-20 (GRPNTGKS) are G1. Residue 13–20 (GRPNTGKS) coordinates GTP. Residues 39 to 43 (QTTRH) form a G2 region. Positions 60–63 (DTPG) are G3. GTP contacts are provided by residues 60–64 (DTPGL) and 125–128 (TKID). A G4 region spans residues 125–128 (TKID). Positions 155–157 (VSA) are G5. Residues 207-286 (VRDELPHSLA…YLDLRVKVAK (80 aa)) form the KH type-2 domain.

This sequence belongs to the TRAFAC class TrmE-Era-EngA-EngB-Septin-like GTPase superfamily. Era GTPase family. Monomer.

The protein resides in the cell envelope. The protein localises to the secreted. It is found in the cell wall. In terms of biological role, exhibits GTPase activity. Binds RNA but is probably not involved in ribosome assembly in mycobacteria. In Mycobacterium bovis (strain ATCC BAA-935 / AF2122/97), this protein is GTPase Era.